We begin with the raw amino-acid sequence, 362 residues long: Sulfate/thiosulfate import ATP-binding protein CysA (362 aa).

One can recognise an ABC transporter domain in the interval 13–243 (ITVRDAYKRY…PTNAFVMSFL (231 aa)). 45–52 (GPSGSGKS) is an ATP binding site.

This sequence belongs to the ABC transporter superfamily. Sulfate/tungstate importer (TC 3.A.1.6) family. The complex is composed of two ATP-binding proteins (CysA), two transmembrane proteins (CysT and CysW) and a solute-binding protein (CysP).

It localises to the cell membrane. It catalyses the reaction sulfate(out) + ATP + H2O = sulfate(in) + ADP + phosphate + H(+). The catalysed reaction is thiosulfate(out) + ATP + H2O = thiosulfate(in) + ADP + phosphate + H(+). Part of the ABC transporter complex CysAWTP involved in sulfate/thiosulfate import. Responsible for energy coupling to the transport system. This is Sulfate/thiosulfate import ATP-binding protein CysA from Mycolicibacterium paratuberculosis (strain ATCC BAA-968 / K-10) (Mycobacterium paratuberculosis).